The primary structure comprises 255 residues: Probable UDP-N-acetylglucosamine pyrophosphorylase (255 aa).

It catalyses the reaction N-acetyl-alpha-D-glucosamine 1-phosphate + UTP + H(+) = UDP-N-acetyl-alpha-D-glucosamine + diphosphate. The protein operates within nucleotide-sugar biosynthesis; UDP-N-acetyl-alpha-D-glucosamine biosynthesis; UDP-N-acetyl-alpha-D-glucosamine from N-acetyl-alpha-D-glucosamine 1-phosphate: step 1/1. The protein is Probable UDP-N-acetylglucosamine pyrophosphorylase of Acanthamoeba polyphaga (Amoeba).